The primary structure comprises 157 residues: Small ribosomal subunit protein uS7 (157 aa).

The protein belongs to the universal ribosomal protein uS7 family. Part of the 30S ribosomal subunit. Contacts proteins S9 and S11.

Functionally, one of the primary rRNA binding proteins, it binds directly to 16S rRNA where it nucleates assembly of the head domain of the 30S subunit. Is located at the subunit interface close to the decoding center, probably blocks exit of the E-site tRNA. The sequence is that of Small ribosomal subunit protein uS7 from Borrelia turicatae (strain 91E135).